A 441-amino-acid polypeptide reads, in one-letter code: Phenoloxidase-activating enzyme (441 aa).

A signal peptide spans 1–21 (MFLIWTFIVAVLAIQTKSVVA). Glutamine 22 bears the Pyrrolidone carboxylic acid mark. Clip domains are found at residues 23–76 (SCRT…AVCC) and 77–127 (PCNA…SICC). Intrachain disulfides connect cysteine 24–cysteine 75, cysteine 34–cysteine 65, cysteine 40–cysteine 76, cysteine 78–cysteine 126, cysteine 88–cysteine 117, cysteine 94–cysteine 127, cysteine 164–cysteine 305, and cysteine 203–cysteine 219. Residues 174–440 (IVGGAPASID…YLPWIQNTIE (267 aa)) enclose the Peptidase S1 domain. Histidine 218 serves as the catalytic Charge relay system. Residues glutamate 237, asparagine 239, asparagine 242, and aspartate 246 each contribute to the Ca(2+) site. N-linked (GlcNAc...) asparagine glycosylation is present at asparagine 239. Residue aspartate 285 is the Charge relay system of the active site. Residue asparagine 334 is glycosylated (N-linked (GlcNAc...) asparagine). 2 cysteine pairs are disulfide-bonded: cysteine 356/cysteine 377 and cysteine 387/cysteine 416. Residue serine 391 is the Charge relay system of the active site.

The protein belongs to the peptidase S1 family. CLIP subfamily. In terms of assembly, in the active form, heterodimer of a light chain and a heavy chain; disulfide-linked. Post-translationally, proteolytically cleaved for activation. Cleavage produces a light chain and a catalytic heavy chain which remains covalently associated probably through an interchain disulfide bond. In terms of processing, glycosylated.

Stabilized by calcium. Inhibited by di-isopropyl phosphorofluoridate (DFP), phenylmethanesulfonylfluoride (PMSF), p-nitrophenyl-p'-guanidinobenzonate (p-NPGB), p-chloromercuribenzoate (PCMB), ethylenediaminetetraacetic acid (EDTA), urea and CI-13c. Functionally, endopeptidase with selective post-Arg cleavage site. Activates prophenoloxidase. Has a probable role in the melanization process as part of the innate immune response. This is Phenoloxidase-activating enzyme from Bombyx mori (Silk moth).